A 133-amino-acid chain; its full sequence is UPF0134 protein MPN_151 (133 aa).

This sequence belongs to the UPF0134 family.

The sequence is that of UPF0134 protein MPN_151 from Mycoplasma pneumoniae (strain ATCC 29342 / M129 / Subtype 1) (Mycoplasmoides pneumoniae).